We begin with the raw amino-acid sequence, 727 residues long: Engulfment and cell motility protein 1 (727 aa).

Tyrosine 18 carries the post-translational modification Phosphotyrosine; by HCK. N6-acetyllysine is present on residues lysine 100 and lysine 105. At tyrosine 216 the chain carries Phosphotyrosine; by HCK. One can recognise an ELMO domain in the interval 319-492 (AQRDIIFELR…VVKEQVMRAL (174 aa)). Residue serine 344 is modified to Phosphoserine. 2 positions are modified to phosphotyrosine; by HCK: tyrosine 395 and tyrosine 511. One can recognise a PH domain in the interval 555 to 676 (RLVEGTCFRK…DGLNALLGKD (122 aa)). The short motif at 707 to 714 (PDAPPPIP) is the SH3-binding element. Tyrosine 720 carries the post-translational modification Phosphotyrosine; by HCK.

Interacts with ADGRB1. Interacts directly with the SH3-domain of DOCK1 via its SH3-binding site. Part of a complex with DOCK1 and RAC1. Part of a complex with DOCK1 and CRK isoform CRK-II. Interacts with PLEKHG6. Interacts with HCK (via SH3 domain). Interacts with ADGRB3. Interacts with DOCK5. In terms of processing, phosphorylated by HCK. In terms of tissue distribution, widely expressed, with a higher expression in the spleen and placenta.

Its subcellular location is the cytoplasm. It is found in the cell membrane. Its function is as follows. Involved in cytoskeletal rearrangements required for phagocytosis of apoptotic cells and cell motility. Acts in association with DOCK1 and CRK. Was initially proposed to be required in complex with DOCK1 to activate Rac Rho small GTPases. May enhance the guanine nucleotide exchange factor (GEF) activity of DOCK1. The protein is Engulfment and cell motility protein 1 (ELMO1) of Homo sapiens (Human).